Reading from the N-terminus, the 175-residue chain is NADH-ubiquinone oxidoreductase chain 6 (175 aa).

The next 5 membrane-spanning stretches (helical) occupy residues 1-21 (MMTY…VGFS), 25-45 (SPIY…GIVL), 47-67 (FGGS…MLVV), 88-108 (AVLG…CYIL), and 149-169 (YGTW…LVIM).

It belongs to the complex I subunit 6 family. In terms of assembly, core subunit of respiratory chain NADH dehydrogenase (Complex I) which is composed of 45 different subunits.

It is found in the mitochondrion inner membrane. It catalyses the reaction a ubiquinone + NADH + 5 H(+)(in) = a ubiquinol + NAD(+) + 4 H(+)(out). Its function is as follows. Core subunit of the mitochondrial membrane respiratory chain NADH dehydrogenase (Complex I) which catalyzes electron transfer from NADH through the respiratory chain, using ubiquinone as an electron acceptor. Essential for the catalytic activity and assembly of complex I. The sequence is that of NADH-ubiquinone oxidoreductase chain 6 (MT-ND6) from Halichoerus grypus (Gray seal).